The primary structure comprises 379 residues: Guanine nucleotide-binding protein G(s) subunit alpha (379 aa).

The segment at 1 to 25 (MGCLGNSKTEDQRNEEKVQRETNKK) is disordered. Gly-2 carries the N-palmitoyl glycine lipid modification. The S-palmitoyl cysteine moiety is linked to residue Cys-3. Residues 8 to 25 (KTEDQRNEEKVQRETNKK) are compositionally biased toward basic and acidic residues. In terms of domain architecture, G-alpha spans 39–379 (ATHRLLLLGA…RMHLRQYELL (341 aa)). Positions 42-55 (RLLLLGAGESGKSS) are G1 motif. Residues 47-55 (GAGESGKSS), 182-189 (LLRCRVLT), 208-212 (DVGGQ), 277-280 (NKQD), and Ala-351 contribute to the GTP site. Mg(2+) contacts are provided by Ser-54 and Thr-189. The tract at residues 181 to 189 (DLLRCRVLT) is G2 motif. Residues 204 to 213 (FHMFDVGGQR) form a G3 motif region. Residues 273–280 (ILFLNKQD) form a G4 motif region. The segment at 349–354 (TCAVDT) is G5 motif.

This sequence belongs to the G-alpha family. G(s) subfamily. As to quaternary structure, heterotrimeric G proteins are composed of 3 units; alpha, beta and gamma. The alpha chain contains the guanine nucleotide binding site.

It localises to the cell membrane. Its function is as follows. Guanine nucleotide-binding proteins (G proteins) function as transducers in numerous signaling pathways controlled by G protein-coupled receptors (GPCRs). Signaling involves the activation of adenylyl cyclases, resulting in increased levels of the signaling molecule cAMP. GNAS functions downstream of several GPCRs, including beta-adrenergic receptors. Stimulates the Ras signaling pathway. In Xenopus laevis (African clawed frog), this protein is Guanine nucleotide-binding protein G(s) subunit alpha (gnas).